A 580-amino-acid chain; its full sequence is E3 ubiquitin-protein ligase TRIM45 (580 aa).

An RING-type zinc finger spans residues 29–98; sequence CPTCLRLFKV…QIGILCPVCD (70 aa). 2 B box-type zinc fingers span residues 130–176 and 186–227; these read GQGL…MVDL and GKPI…YDFT. Positions 135, 138, 158, 162, 191, 194, 214, and 219 each coordinate Zn(2+). A coiled-coil region spans residues 249–329; it reads VEALEDALAQ…LLADMRTGVE (81 aa). One copy of the Filamin repeat lies at 394 to 497; the sequence is TQEVDPAQCV…VQGSPFNVTV (104 aa).

Belongs to the TRIM/RBCC family.

The protein localises to the cytoplasm. Its subcellular location is the nucleus. It carries out the reaction S-ubiquitinyl-[E2 ubiquitin-conjugating enzyme]-L-cysteine + [acceptor protein]-L-lysine = [E2 ubiquitin-conjugating enzyme]-L-cysteine + N(6)-ubiquitinyl-[acceptor protein]-L-lysine.. Functionally, E3 ubiquitin-protein ligase that plays a role in the regulation of inflammatory response. Mechanistically, mediates the 'Lys-48'-linked polyubiquitination of TAB2, a regulatory protein of the kinase TAK1, leading to its degradation via the proteasomal pathway and inhibition of the TLR-mediated inflammatory immune response. May act as a transcriptional repressor in mitogen-activated protein kinase signaling pathway. This is E3 ubiquitin-protein ligase TRIM45 (Trim45) from Mus musculus (Mouse).